Here is a 550-residue protein sequence, read N- to C-terminus: Chaperonin GroEL (550 aa).

ATP contacts are provided by residues 30-33 (TLGP), Lys51, 87-91 (DGTTT), Gly415, 478-480 (NAA), and Asp494.

It belongs to the chaperonin (HSP60) family. Forms a cylinder of 14 subunits composed of two heptameric rings stacked back-to-back. Interacts with the co-chaperonin GroES.

It is found in the cytoplasm. It carries out the reaction ATP + H2O + a folded polypeptide = ADP + phosphate + an unfolded polypeptide.. In terms of biological role, together with its co-chaperonin GroES, plays an essential role in assisting protein folding. The GroEL-GroES system forms a nano-cage that allows encapsulation of the non-native substrate proteins and provides a physical environment optimized to promote and accelerate protein folding. This Desulfosudis oleivorans (strain DSM 6200 / JCM 39069 / Hxd3) (Desulfococcus oleovorans) protein is Chaperonin GroEL.